The primary structure comprises 693 residues: DNA ligase (693 aa).

Residues 45–49 (DSEYD), 94–95 (SI), and glutamate 131 each bind NAD(+). Lysine 133 acts as the N6-AMP-lysine intermediate in catalysis. Residues arginine 154, glutamate 190, lysine 307, and lysine 331 each coordinate NAD(+). Zn(2+)-binding residues include cysteine 429, cysteine 432, cysteine 447, and cysteine 453. A BRCT domain is found at 615–693 (ASSSKLEGKT…EEGLLSLLAE (79 aa)).

The protein belongs to the NAD-dependent DNA ligase family. LigA subfamily. The cofactor is Mg(2+). It depends on Mn(2+) as a cofactor.

The enzyme catalyses NAD(+) + (deoxyribonucleotide)n-3'-hydroxyl + 5'-phospho-(deoxyribonucleotide)m = (deoxyribonucleotide)n+m + AMP + beta-nicotinamide D-nucleotide.. DNA ligase that catalyzes the formation of phosphodiester linkages between 5'-phosphoryl and 3'-hydroxyl groups in double-stranded DNA using NAD as a coenzyme and as the energy source for the reaction. It is essential for DNA replication and repair of damaged DNA. The polypeptide is DNA ligase (Methylobacillus flagellatus (strain ATCC 51484 / DSM 6875 / VKM B-1610 / KT)).